Reading from the N-terminus, the 67-residue chain is Cell division protein ZapB (67 aa).

Residues 3 to 59 adopt a coiled-coil conformation; sequence LELLSKLETKIQAALETIELLKMELEEEKQTSSSLSEQNQQLQQELTSWNEKVTGLV.

It belongs to the ZapB family. As to quaternary structure, homodimer. The ends of the coiled-coil dimer bind to each other, forming polymers. Interacts with FtsZ.

It is found in the cytoplasm. Functionally, non-essential, abundant cell division factor that is required for proper Z-ring formation. It is recruited early to the divisome by direct interaction with FtsZ, stimulating Z-ring assembly and thereby promoting cell division earlier in the cell cycle. Its recruitment to the Z-ring requires functional FtsA or ZipA. This is Cell division protein ZapB from Shewanella halifaxensis (strain HAW-EB4).